Here is a 1320-residue protein sequence, read N- to C-terminus: MSMLKPSGLKAPTKILKPGSTALKTPAAAAAPLEKTVPSEKASGPPSSETQEEFVDDFRVGERVWVNGNKPGFIQFLGETQFAPGQWAGIVLDEPIGKNDGSVAGVRYFQCEPLKGIFTRPSKLTRKVQAEDEANGLQTAHARAASPLSTAAATMVSSSPATPSNIPQKPSQPVAKETSATPQISNLTKTASESISNLSEAGSVKKGERELKIGDRVLVGGTKAGVVRFLGETDFAKGEWCGVELDEPLGKNDGAVAGTRYFQCQPKYGLFAPVHKVTKIGFPSTTPAKAKAAAVRRVMATTPASLKRSPSASSLSSMSSVASSVSSKPSRTGLLTETSSRYARKISGTTALQEALKEKQQHIEQLLAERDLERAEVAKATSHVGEIEQELALARDGHDQHVLELEAKMDQLRTMVEAADREKVELLNQLEEEKRKVEDLQFRVEEESITKGDLETQTKLEHARIKELEQSLLFEKTKADKLQRELEDTRVATVSEKSRIMELEKDLALRVQEVAELRRRLESSKPPGDVDMSLSLLQEISALQEKLEVTHTDHQNEVTSLKDHFGTREEMFQKEIKALHAATEKLSKENESLRSKLDHANKENSDVIALWKSKLETAIASHQQAMEELKVSFSKGIGTDSAEFAELKTQIERLRLDYQHEIESLQSKQDSERSAHAKEMESMKAKLMKIIKEKEDSLEAVKARLDTAEDQHLVEMEEMLSKLQEAEIKKEKFASASEEAVSTQTSMQDTVNKLHQKEEQFNMLSSELEKLRENLTDMEAKFKEKDEREDQLVKAKEKLENDIAEIMKMSGDNSSQLTKMNDELRLKERSVEELQLKLTKANENASLLQKSIGEVTLKAEQSQQEAAKKHEEEKKELENKLLELEKKMETSHYQCQDLKAKYEKASSETKIKHEEILQNFQKMLVDTEDKLKAAQEANRDLMQDMEELKSQADKAKAAQTAEDAMQIMEQMTKEKTETLASLEDTKQTNAKLQSELDTLKENNLKTVEELNKSKELLNEENQKMEEFKKEIETLKQAAAQKSQQLSALQEENVKLAEELGRTRDEVTSHQKLEEERSVLNNQLLEMKKSLPSNTLRESEYRKDADEEKASLQKSISLTSALLTEKDAELEKLRNEVTVLRGENASAKSLHSVVQTLESDKVKLELKVKNLELQLKENKRQLSSSSGNTDVQTEEDERAQESQQMIDFLNSVIVDLQRKNQDLKMKVEMMSEAALNGNGEDPNSYDSDDQEKQSKKKPRLFCDICDCFDLHDTEDCPTQAQMSEDPPHSTHHGSRSEERPYCEICEMFGHWATNCNDDETF.

The disordered stretch occupies residues 1–53; sequence MSMLKPSGLKAPTKILKPGSTALKTPAAAAAPLEKTVPSEKASGPPSSETQEE. Positions 21–35 are enriched in low complexity; sequence TALKTPAAAAAPLEK. Ser-48 is modified (phosphoserine). Residue Thr-50 is modified to Phosphothreonine. Residues 78 to 120 form the CAP-Gly 1 domain; sequence GETQFAPGQWAGIVLDEPIGKNDGSVAGVRYFQCEPLKGIFTR. The important for tubulin binding stretch occupies residues 97 to 101; the sequence is GKNDG. Ser-146 carries the post-translational modification Phosphoserine. Residues 156 to 171 are compositionally biased toward polar residues; it reads VSSSPATPSNIPQKPS. A disordered region spans residues 156–181; it reads VSSSPATPSNIPQKPSQPVAKETSAT. Thr-181 is subject to Phosphothreonine. Ser-194, Ser-196, Ser-199, and Ser-203 each carry phosphoserine. Positions 231–273 constitute a CAP-Gly 2 domain; the sequence is GETDFAKGEWCGVELDEPLGKNDGAVAGTRYFQCQPKYGLFAP. The span at 301-331 shows a compositional bias: low complexity; the sequence is TTPASLKRSPSASSLSSMSSVASSVSSKPSR. The disordered stretch occupies residues 301–338; that stretch reads TTPASLKRSPSASSLSSMSSVASSVSSKPSRTGLLTET. At Ser-309 the chain carries Phosphoserine. Position 311 is a phosphoserine; by PKA (Ser-311). Phosphoserine occurs at positions 314 and 347. Positions 1089–1109 are disordered; the sequence is SLPSNTLRESEYRKDADEEKA. Over residues 1096-1109 the composition is skewed to basic and acidic residues; that stretch reads RESEYRKDADEEKA. Phosphoserine is present on Ser-1116. A disordered region spans residues 1178-1201; it reads KRQLSSSSGNTDVQTEEDERAQES. Over residues 1180 to 1190 the composition is skewed to polar residues; the sequence is QLSSSSGNTDV. Phosphoserine is present on Ser-1246. The CCHC-type zinc-finger motif lies at 1299–1316; that stretch reads PYCEICEMFGHWATNCND.

Interacts with MTOR; phosphorylates and regulates CLIP1. Interacts (via CAP-Gly domains) with tubulin and TUBA1B. Interacts with SLAIN2. Interacts with MAPRE1 and MAPRE3. Interacts (via zinc finger) with DCTN1. Binds preferentially to tyrosinated microtubules, and only marginally to detyrosinated microtubules. Post-translationally, phosphorylated. Phosphorylation induces conformational changes by increasing the affinity of the N-terminus for C-terminus, resulting in inhibition of its function thus decreasing its binding to microtubules and DCTN1. Exhibits a folded, autoinhibited conformation when phosphorylated and an open conformation when dephosphorylated with increased binding affinity to microtubules and DCTN1. Phosphorylation regulates its recruitment to tyrosinated microtubules and the recruitment of vesicular cargo to microtubules in neurons. Phosphorylation by MTOR may positively regulate CLIP1 association with microtubules.

The protein localises to the cytoplasm. Its subcellular location is the cytoskeleton. It is found in the cytoplasmic vesicle membrane. It localises to the cell projection. The protein resides in the ruffle. Its function is as follows. Binds to the plus end of microtubules and regulates the dynamics of the microtubule cytoskeleton. Promotes microtubule growth and microtubule bundling. Links cytoplasmic vesicles to microtubules and thereby plays an important role in intracellular vesicle trafficking. Plays a role macropinocytosis and endosome trafficking. The chain is CAP-Gly domain-containing linker protein 1 (Clip1) from Rattus norvegicus (Rat).